A 169-amino-acid chain; its full sequence is Putative phosphoesterase SERP0604 (169 aa).

Catalysis depends on His-34, which acts as the Proton donor. Short sequence motifs (HXTX) lie at residues 34-37 and 115-118; these read HITI and HFTI. Residue His-115 is the Proton acceptor of the active site.

It belongs to the 2H phosphoesterase superfamily. YjcG family.

In Staphylococcus epidermidis (strain ATCC 35984 / DSM 28319 / BCRC 17069 / CCUG 31568 / BM 3577 / RP62A), this protein is Putative phosphoesterase SERP0604.